A 389-amino-acid polypeptide reads, in one-letter code: MAASFPEGVPETEDGKRPQFGHRFLSDPARVFHHNAWDNVKWSEEQAAAAERKVQENSSPLVCPEKQVDYEVNAHKYWDDFYRIHENGFFKDRHWLFTEFPELAPSHSHLTGVPLEKQRSDVCEDGPGLTAEQHKCSCASPGCETQVPPLEEPVTQKLGHLEISGEEFPGSSATYRILEVGCGVGNTVFPILQTNNNPNLFVYCCDFSATAIELLKTNSQYDPSRCYAFVHDLCDEDQSYPVPEDSLDVIVLIFVLSAIVPDKMQKAISKLSRLLKPGGVMLLRDYGRYDMAQLRFKKGQCLSGNFYVRGDGTRVYFFTQGELDTLFTAAGLEKVQNLVDRRLQVNRGKQLTMYRVWIQCKYSKPLALRSSQHVPIPHATESSSHSGLL.

The segment at 1 to 20 (MAASFPEGVPETEDGKRPQF) is disordered. Residues tryptophan 78, tyrosine 82, glycine 181, aspartate 206, aspartate 232, leucine 233, and isoleucine 253 each contribute to the S-adenosyl-L-methionine site.

The protein belongs to the methyltransferase superfamily. METL family. In terms of assembly, monomer. Interacts with DALRD3.

Its subcellular location is the cytoplasm. It catalyses the reaction cytidine(32) in tRNA(Thr) + S-adenosyl-L-methionine = N(3)-methylcytidine(32) in tRNA(Thr) + S-adenosyl-L-homocysteine + H(+). The catalysed reaction is cytidine(32) in tRNA(Arg)(CCU) + S-adenosyl-L-methionine = N(3)-methylcytidine(32) in tRNA(Arg)(CCU) + S-adenosyl-L-homocysteine + H(+). S-adenosyl-L-methionine-dependent methyltransferase that mediates N(3)-methylcytidine modification of residue 32 of the tRNA anticodon loop of tRNA(Thr)(UGU) and tRNA(Arg)(CCU). N(3)-methylcytidine methylation by METTL2 requires the N6-threonylcarbamoylation of tRNA (t6A37) by the EKC/KEOPS complex as prerequisite. The polypeptide is tRNA N(3)-cytidine methyltransferase METTL2 (Mus musculus (Mouse)).